The following is a 326-amino-acid chain: ATPase GET3 (326 aa).

32-39 lines the ATP pocket; sequence KGGVGKTT. Aspartate 61 is a catalytic residue. Positions 244 and 271 each coordinate ATP. Residues cysteine 282 and cysteine 285 each coordinate Zn(2+).

It belongs to the arsA ATPase family. Homodimer.

The protein resides in the cytoplasm. It localises to the endoplasmic reticulum. In terms of biological role, ATPase required for the post-translational delivery of tail-anchored (TA) proteins to the endoplasmic reticulum. Recognizes and selectively binds the transmembrane domain of TA proteins in the cytosol. This complex then targets to the endoplasmic reticulum by membrane-bound receptors, where the tail-anchored protein is released for insertion. This process is regulated by ATP binding and hydrolysis. ATP binding drives the homodimer towards the closed dimer state, facilitating recognition of newly synthesized TA membrane proteins. ATP hydrolysis is required for insertion. Subsequently, the homodimer reverts towards the open dimer state, lowering its affinity for the membrane-bound receptor, and returning it to the cytosol to initiate a new round of targeting. This Phaeosphaeria nodorum (strain SN15 / ATCC MYA-4574 / FGSC 10173) (Glume blotch fungus) protein is ATPase GET3.